The chain runs to 362 residues: S-adenosylmethionine:tRNA ribosyltransferase-isomerase (362 aa).

This sequence belongs to the QueA family. Monomer.

The protein localises to the cytoplasm. It carries out the reaction 7-aminomethyl-7-carbaguanosine(34) in tRNA + S-adenosyl-L-methionine = epoxyqueuosine(34) in tRNA + adenine + L-methionine + 2 H(+). The protein operates within tRNA modification; tRNA-queuosine biosynthesis. In terms of biological role, transfers and isomerizes the ribose moiety from AdoMet to the 7-aminomethyl group of 7-deazaguanine (preQ1-tRNA) to give epoxyqueuosine (oQ-tRNA). The protein is S-adenosylmethionine:tRNA ribosyltransferase-isomerase of Yersinia enterocolitica serotype O:8 / biotype 1B (strain NCTC 13174 / 8081).